The following is a 237-amino-acid chain: MSDVTTAEFNEEGKYLRKVRSFVLREGRLTKGQAQAMEQQWPKIGLDYTPEPIDLVEVFGREADTVLEIGFGMGASLVAMAKAAPELNFIGIEVHKPGVGACLAEAAEAGVTNLRVYHHDAIEVLENSIAEGSLACVQLFFPDPWHKTRHHKRRIVQAPFAELIRSKLKVGGVFHLATDWENYSEHMLEVMTAAPGYKNQSATGDVVERPAHRPLTKFEARGHRLGHGVWDLMFERV.

Glutamate 68, glutamate 93, aspartate 120, and aspartate 143 together coordinate S-adenosyl-L-methionine. Aspartate 143 is a catalytic residue. Substrate-binding positions include lysine 147, aspartate 179, and 216-219 (TKFE).

The protein belongs to the class I-like SAM-binding methyltransferase superfamily. TrmB family.

It catalyses the reaction guanosine(46) in tRNA + S-adenosyl-L-methionine = N(7)-methylguanosine(46) in tRNA + S-adenosyl-L-homocysteine. Its pathway is tRNA modification; N(7)-methylguanine-tRNA biosynthesis. Its function is as follows. Catalyzes the formation of N(7)-methylguanine at position 46 (m7G46) in tRNA. This chain is tRNA (guanine-N(7)-)-methyltransferase, found in Shewanella pealeana (strain ATCC 700345 / ANG-SQ1).